Consider the following 318-residue polypeptide: MTKNFLDFEQPIAELEAKIEELRNVGQDSEVNINEEIQRLEAKSRSLTEKIFSSLSAWQIVQLARHPERPYLFDYIERIFTDFQELHGDRAYADDAAIAGGVARFDGRPVMVIGQQKGRDTKEKVRRNFGMPRPEGYRKALRLMRMAERFGLPIFTFIDTPGAYPGVGAEERGQSEAIARNLAEMAQLRVPVICTVVGEGGSGGALAISVGNRLLMLRYSVYSVISPEGCASILWKSSERAADAAEAMQMAAERLHDLGIVDRVIPEPLGGAHRDYEAMAETLREALREEWARVGQMSPDELVADRHQRLAAIGQPQG.

Residues 32–293 (NINEEIQRLE…REALREEWAR (262 aa)) form the CoA carboxyltransferase C-terminal domain.

The protein belongs to the AccA family. Acetyl-CoA carboxylase is a heterohexamer composed of biotin carboxyl carrier protein (AccB), biotin carboxylase (AccC) and two subunits each of ACCase subunit alpha (AccA) and ACCase subunit beta (AccD).

The protein resides in the cytoplasm. The enzyme catalyses N(6)-carboxybiotinyl-L-lysyl-[protein] + acetyl-CoA = N(6)-biotinyl-L-lysyl-[protein] + malonyl-CoA. The protein operates within lipid metabolism; malonyl-CoA biosynthesis; malonyl-CoA from acetyl-CoA: step 1/1. Component of the acetyl coenzyme A carboxylase (ACC) complex. First, biotin carboxylase catalyzes the carboxylation of biotin on its carrier protein (BCCP) and then the CO(2) group is transferred by the carboxyltransferase to acetyl-CoA to form malonyl-CoA. This chain is Acetyl-coenzyme A carboxylase carboxyl transferase subunit alpha, found in Halorhodospira halophila (strain DSM 244 / SL1) (Ectothiorhodospira halophila (strain DSM 244 / SL1)).